Consider the following 67-residue polypeptide: MSLLPVMVIFGLSFPPIFLELLISLALFFVVRRILQPTGIYEFVWHPALFNTALYCCLFYLTSRLFS.

The next 2 membrane-spanning stretches (helical) occupy residues 3–23 (LLPVMVIFGLSFPPIFLELLI) and 39–59 (GIYEFVWHPALFNTALYCCLF).

Belongs to the AaeX family.

The protein localises to the cell membrane. The chain is Protein AaeX from Yersinia pseudotuberculosis serotype O:1b (strain IP 31758).